Reading from the N-terminus, the 473-residue chain is Photosystem II CP43 reaction center protein (473 aa).

Residues 1-14 (MKILYSQRRFYHVE) constitute a propeptide that is removed on maturation. 5 helical membrane-spanning segments follow: residues 69–93 (LFEV…PHLA), 134–155 (LIGP…RDKN), 178–200 (KAMF…RYIN), 255–275 (KPFG…LSYS), and 291–312 (WYNN…ASQA). Glu-367 lines the [CaMn4O5] cluster pocket. A helical transmembrane segment spans residues 447–471 (RARAAAAGFEKGINRENEPVLSMKL).

Belongs to the PsbB/PsbC family. PsbC subfamily. In terms of assembly, PSII is composed of 1 copy each of membrane proteins PsbA, PsbB, PsbC, PsbD, PsbE, PsbF, PsbH, PsbI, PsbJ, PsbK, PsbL, PsbM, PsbT, PsbY, PsbZ, Psb30/Ycf12, at least 3 peripheral proteins of the oxygen-evolving complex and a large number of cofactors. It forms dimeric complexes. The cofactor is Binds multiple chlorophylls and provides some of the ligands for the Ca-4Mn-5O cluster of the oxygen-evolving complex. It may also provide a ligand for a Cl- that is required for oxygen evolution. PSII binds additional chlorophylls, carotenoids and specific lipids..

The protein localises to the plastid. The protein resides in the chloroplast thylakoid membrane. Its function is as follows. One of the components of the core complex of photosystem II (PSII). It binds chlorophyll and helps catalyze the primary light-induced photochemical processes of PSII. PSII is a light-driven water:plastoquinone oxidoreductase, using light energy to abstract electrons from H(2)O, generating O(2) and a proton gradient subsequently used for ATP formation. This chain is Photosystem II CP43 reaction center protein, found in Galdieria sulphuraria (Red alga).